The chain runs to 817 residues: Leucine--tRNA ligase (817 aa).

The short motif at 40-50 (PYPSGKLHMGH) is the 'HIGH' region element. The short motif at 578 to 582 (KMSKS) is the 'KMSKS' region element. Residue lysine 581 participates in ATP binding.

This sequence belongs to the class-I aminoacyl-tRNA synthetase family.

The protein resides in the cytoplasm. It carries out the reaction tRNA(Leu) + L-leucine + ATP = L-leucyl-tRNA(Leu) + AMP + diphosphate. This is Leucine--tRNA ligase from Caldicellulosiruptor saccharolyticus (strain ATCC 43494 / DSM 8903 / Tp8T 6331).